The sequence spans 1342 residues: DNA-directed RNA polymerase subunit beta (1342 aa).

N6-acetyllysine occurs at positions 1022 and 1200.

It belongs to the RNA polymerase beta chain family. As to quaternary structure, the RNAP catalytic core consists of 2 alpha, 1 beta, 1 beta' and 1 omega subunit. When a sigma factor is associated with the core the holoenzyme is formed, which can initiate transcription.

The catalysed reaction is RNA(n) + a ribonucleoside 5'-triphosphate = RNA(n+1) + diphosphate. In terms of biological role, DNA-dependent RNA polymerase catalyzes the transcription of DNA into RNA using the four ribonucleoside triphosphates as substrates. This is DNA-directed RNA polymerase subunit beta from Shigella flexneri serotype 5b (strain 8401).